Here is a 483-residue protein sequence, read N- to C-terminus: ATP synthase subunit beta (483 aa).

An ATP-binding site is contributed by 169–176 (GGAGVGKT).

Belongs to the ATPase alpha/beta chains family. In terms of assembly, F-type ATPases have 2 components, CF(1) - the catalytic core - and CF(0) - the membrane proton channel. CF(1) has five subunits: alpha(3), beta(3), gamma(1), delta(1), epsilon(1). CF(0) has three main subunits: a(1), b(2) and c(9-12). The alpha and beta chains form an alternating ring which encloses part of the gamma chain. CF(1) is attached to CF(0) by a central stalk formed by the gamma and epsilon chains, while a peripheral stalk is formed by the delta and b chains.

Its subcellular location is the cell membrane. It catalyses the reaction ATP + H2O + 4 H(+)(in) = ADP + phosphate + 5 H(+)(out). Its function is as follows. Produces ATP from ADP in the presence of a proton gradient across the membrane. The catalytic sites are hosted primarily by the beta subunits. The chain is ATP synthase subunit beta from Rhodococcus erythropolis (strain PR4 / NBRC 100887).